Reading from the N-terminus, the 208-residue chain is Peptidyl-prolyl cis-trans isomerase FKBP13, chloroplastic (208 aa).

2 disulfide bridges follow: Cys84-Cys96 and Cys185-Cys190. Residues 109-208 form the PPIase FKBP-type domain; the sequence is GQLIKAHYVG…LFDIEYIGKA (100 aa).

Belongs to the FKBP-type PPIase family. As to quaternary structure, interacts in vitro with LTO1. The precursor, but not the mature form of the protein, interacts with the Rieske protein. As to expression, expressed in stems, leaves and developing flower buds, but not in roots.

The protein localises to the plastid. It is found in the chloroplast thylakoid lumen. The catalysed reaction is [protein]-peptidylproline (omega=180) = [protein]-peptidylproline (omega=0). PPIase activity is optimal in oxidized form (S-S) and minimal in reduced form (SH). Reduction of the oxidized form is mediated by thioredoxin (TRX-M). Functionally, PPIases accelerate the folding of proteins. It catalyzes the cis-trans isomerization of proline imidic peptide bonds in oligopeptides. Responsive of the major PPIase activity in the chloroplast thylakoid lumen. Regulates the accumulation of Rieske protein, an essential component of the photosynthetic electron transport chain. The sequence is that of Peptidyl-prolyl cis-trans isomerase FKBP13, chloroplastic from Arabidopsis thaliana (Mouse-ear cress).